The chain runs to 307 residues: Agmatinase (307 aa).

Mn(2+) contacts are provided by H128, D151, H153, D155, D232, and D234.

It belongs to the arginase family. Agmatinase subfamily. Mn(2+) serves as cofactor.

The catalysed reaction is agmatine + H2O = urea + putrescine. It functions in the pathway amine and polyamine biosynthesis; putrescine biosynthesis via agmatine pathway; putrescine from agmatine: step 1/1. Functionally, catalyzes the formation of putrescine from agmatine. This chain is Agmatinase, found in Neisseria gonorrhoeae (strain ATCC 700825 / FA 1090).